The chain runs to 263 residues: Thymidylate kinase (263 aa).

The N-terminal 51 residues, 1-51, are a transit peptide targeting the mitochondrion; that stretch reads MKRICSVSSVQLFSRSFRALASPRSLNYPLQCIKRSSVRMESSNFSSGVRT. 66–74 is an ATP binding site; that stretch reads GLDRSGKST.

Belongs to the thymidylate kinase family. As to expression, expressed in root, rosette leaves, flower buds, flowers and siliques.

It is found in the mitochondrion. The protein localises to the cytoplasm. It localises to the nucleus. The protein resides in the nucleoplasm. It catalyses the reaction dTMP + ATP = dTDP + ADP. Its pathway is pyrimidine metabolism; dTTP biosynthesis. In terms of biological role, catalyzes the conversion of dTMP to dTDP. Involved in the regulation of DNA replication. Is essential to promote the first division of the zygote. This chain is Thymidylate kinase, found in Arabidopsis thaliana (Mouse-ear cress).